The chain runs to 70 residues: Homeobox protein CDX (70 aa).

The segment at residues 1–60 is a DNA-binding region (homeobox); sequence PDKYRVVYTDYQRLELEKEFHYSRYITMNRKAELAKSLDLTERQIKIWFQNRRAKERKIN.

It belongs to the Caudal homeobox family.

It is found in the nucleus. This Lineus sanguineus (Ribbon worm) protein is Homeobox protein CDX (CDX).